The primary structure comprises 117 residues: MSWRGRSTYYWPRPRPYVQPPEMIGPMRPEQFSDEVEPATPEEGEPATQRQDPAAAQEGEDEGASAGQGPKPEADSQEQGHPQTGCECEDGPDGQEMDPPNPEEVKTPEEGEKQSQC.

The segment at 1–117 (MSWRGRSTYY…PEEGEKQSQC (117 aa)) is disordered. Composition is skewed to acidic residues over residues 32-45 (FSDEVEPATPEEGE) and 87-96 (ECEDGPDGQE). Residues 103-117 (EEVKTPEEGEKQSQC) are compositionally biased toward basic and acidic residues.

Belongs to the GAGE family.

This chain is G antigen 12J (GAGE12J), found in Homo sapiens (Human).